An 85-amino-acid chain; its full sequence is Large ribosomal subunit protein bL27 (85 aa).

Positions 1 to 24 are disordered; sequence MAHKKAGGSSRNGRDSNSKRLGVK.

The protein belongs to the bacterial ribosomal protein bL27 family.

The polypeptide is Large ribosomal subunit protein bL27 (Nitrosospira multiformis (strain ATCC 25196 / NCIMB 11849 / C 71)).